We begin with the raw amino-acid sequence, 307 residues long: Oxygen-dependent coproporphyrinogen-III oxidase (307 aa).

Ser-99 is a substrate binding site. Residues His-103 and His-113 each contribute to the a divalent metal cation site. The Proton donor role is filled by His-113. 115-117 contacts substrate; the sequence is NVR. Positions 152 and 182 each coordinate a divalent metal cation. The interval 247-282 is important for dimerization; that stretch reads YVEFNLVFDRGTLFGLQSGGRTESILLSMPPTAGWR. Residue 265-267 participates in substrate binding; that stretch reads GGR.

It belongs to the aerobic coproporphyrinogen-III oxidase family. As to quaternary structure, homodimer. A divalent metal cation serves as cofactor.

The protein localises to the cytoplasm. It carries out the reaction coproporphyrinogen III + O2 + 2 H(+) = protoporphyrinogen IX + 2 CO2 + 2 H2O. The protein operates within porphyrin-containing compound metabolism; protoporphyrin-IX biosynthesis; protoporphyrinogen-IX from coproporphyrinogen-III (O2 route): step 1/1. In terms of biological role, involved in the heme biosynthesis. Catalyzes the aerobic oxidative decarboxylation of propionate groups of rings A and B of coproporphyrinogen-III to yield the vinyl groups in protoporphyrinogen-IX. This Burkholderia pseudomallei (strain 1106a) protein is Oxygen-dependent coproporphyrinogen-III oxidase.